Reading from the N-terminus, the 127-residue chain is Fluoride-specific ion channel FluC (127 aa).

4 helical membrane passes run 4 to 24 (LLCA…WLGM), 35 to 55 (IGTL…LAWF), 71 to 91 (TGFC…VFLL), and 101 to 121 (LNVM…FWLF). Positions 75 and 78 each coordinate Na(+).

It belongs to the fluoride channel Fluc/FEX (TC 1.A.43) family.

Its subcellular location is the cell inner membrane. It carries out the reaction fluoride(in) = fluoride(out). Its activity is regulated as follows. Na(+) is not transported, but it plays an essential structural role and its presence is essential for fluoride channel function. Its function is as follows. Fluoride-specific ion channel. Important for reducing fluoride concentration in the cell, thus reducing its toxicity. The chain is Fluoride-specific ion channel FluC from Klebsiella pneumoniae (strain 342).